Reading from the N-terminus, the 126-residue chain is uncharacterized protein (126 aa).

Phosphothreonine is present on threonine 68.

This is an uncharacterized protein from Pseudomonas aeruginosa (strain UCBPP-PA14).